Consider the following 214-residue polypeptide: Large ribosomal subunit protein uL3 (214 aa).

Residues 131-155 are disordered; the sequence is GAQRTSHGNSRSHRVPGSIGMAQDP. The residue at position 153 (Gln153) is an N5-methylglutamine.

This sequence belongs to the universal ribosomal protein uL3 family. As to quaternary structure, part of the 50S ribosomal subunit. Forms a cluster with proteins L14 and L19. Post-translationally, methylated by PrmB.

Functionally, one of the primary rRNA binding proteins, it binds directly near the 3'-end of the 23S rRNA, where it nucleates assembly of the 50S subunit. This Neisseria gonorrhoeae (strain ATCC 700825 / FA 1090) protein is Large ribosomal subunit protein uL3.